Here is a 430-residue protein sequence, read N- to C-terminus: Rosmarinate synthase (430 aa).

The active-site Proton acceptor is His-152. Residues 178-210 (TPLPHFDRSSLSARNPPQPQFSHAEYQPPPTLE) form a disordered region. Asp-377 (proton acceptor) is an active-site residue.

The protein belongs to the plant acyltransferase family.

It catalyses the reaction (2R)-3-(3,4-dihydroxyphenyl)lactate + (E)-caffeoyl-CoA = (R)-rosmarinate + CoA. Its function is as follows. Involved in the biosynthesis of rosmarinic acid, a compound with antiviral, antimicrobial and anti-inflammatory activities. Can use 4-coumaroyl- and caffeoyl-CoA as hydroxycinnamoyl donors and 4-Hydroxyphenyllactate and 3.4-Dihydroxyphenyllactate, but not shikimate or quinate, as hydroxycinnamoyl acceptors. Can also putatively catalyze amide formation with D-amino acids as acceptors. The chain is Rosmarinate synthase (RAS) from Plectranthus scutellarioides (Coleus).